A 155-amino-acid polypeptide reads, in one-letter code: Ribosomal RNA large subunit methyltransferase H (155 aa).

S-adenosyl-L-methionine-binding positions include Leu-72, Gly-103, and 122–127 (LSDLTL).

It belongs to the RNA methyltransferase RlmH family. Homodimer.

The protein localises to the cytoplasm. The catalysed reaction is pseudouridine(1915) in 23S rRNA + S-adenosyl-L-methionine = N(3)-methylpseudouridine(1915) in 23S rRNA + S-adenosyl-L-homocysteine + H(+). Functionally, specifically methylates the pseudouridine at position 1915 (m3Psi1915) in 23S rRNA. This is Ribosomal RNA large subunit methyltransferase H from Delftia acidovorans (strain DSM 14801 / SPH-1).